Reading from the N-terminus, the 257-residue chain is Zinc transporter ZupT (257 aa).

A run of 3 helical transmembrane segments spans residues 5–25 (LILT…GVLG), 32–52 (VLAF…LMEM), and 61–81 (GMSP…YFGL). Positions 120 and 123 each coordinate Fe(2+). The Zn(2+) site is built by E123 and H148. Fe(2+)-binding residues include N149, E152, and E181. E152 serves as a coordination point for Zn(2+). 3 consecutive transmembrane segments (helical) span residues 182-202 (IFGG…IVMA), 203-223 (AIMA…LMPL), and 236-256 (GVLC…TIGI).

This sequence belongs to the ZIP transporter (TC 2.A.5) family. ZupT subfamily.

It localises to the cell inner membrane. It catalyses the reaction Zn(2+)(in) = Zn(2+)(out). In terms of biological role, mediates zinc uptake. May also transport other divalent cations. This is Zinc transporter ZupT from Salmonella arizonae (strain ATCC BAA-731 / CDC346-86 / RSK2980).